The sequence spans 270 residues: Proteasome subunit alpha type-1 (270 aa).

The segment at 239–270 is disordered; sequence SMEAAEEAPAAEAESSSMQEEDKGTDAAPMDI. Positions 245-256 are enriched in low complexity; sequence EAPAAEAESSSM.

The protein belongs to the peptidase T1A family. In terms of assembly, the 26S proteasome consists of a 20S proteasome core and two 19S regulatory subunits. The 20S proteasome core is composed of 28 subunits that are arranged in four stacked rings, resulting in a barrel-shaped structure. The two end rings are each formed by seven alpha subunits, and the two central rings are each formed by seven beta subunits. The catalytic chamber with the active sites is on the inside of the barrel.

Its subcellular location is the cytoplasm. The protein localises to the nucleus. The proteasome is a multicatalytic proteinase complex which is characterized by its ability to cleave peptides with Arg, Phe, Tyr, Leu, and Glu adjacent to the leaving group at neutral or slightly basic pH. The proteasome has an ATP-dependent proteolytic activity. This chain is Proteasome subunit alpha type-1 (PAF1), found in Oryza sativa subsp. japonica (Rice).